Reading from the N-terminus, the 1425-residue chain is MAAKAIQYNIKVDLHEVKDLSFREAAGEKEIVPNPYIEVTVNGVTKTTIQKTQVVSATFNTSFNFTAYLTPDEFARSYVEVAVLHKYMLIGGVGLQSAVIGKYVFSFAYVYTKSQHWIYRQWVTLRNLDQPQDETGLLLITVGVFGPGDAMPVVDETVCVVNEGERTSTDVNVKLTHYSLSVNIFKGQDIPSVAGQFSTVLEPYVKVKHGGAELQTRPLPDSNPDWLASISIPACVPCFDGNVLVELWNGQDSSTAAGTLMGTVVLDYFQLIKNDLPPRWFNFYWRPPAEGLLGAVTDMMASAELREPIAYGGRILLSASAAKVQTPLPLGVRSARPIPDPATQECVWWLDLYEMTSATGYTSELRIEIAFGPHVIKTASLEANALGTYVIGDNLGRLPEMKIFAPVDEVQVWDVMMYVCSPPATTVAAGIADISNWFSGWGGSPTATQNTPEPAETPWTRLAWVRIPYDSRQFQNGKPQWYSLRSLDGSGTDMFSVLLGMEMFPTKAGKQRAPRLEYKLARFYFRALIYEGLHLPAVGYDVFPDPYIQVELASKTLRTSTIRQTLNPSYYEAYEIEIRLPENISLAPDINVEVISESNSLLSSDVVLGSVQYPIQKVPKEWTKAPVWLQLHSKAYPRCKARVLVAFELVPAEKAEDDTYPFYDDIRPSTKEGNIRLFLVGVRLFKPITQPFVTVCFGRDVENTAEPLWSQESSAPRTGEGGNWNFLEEFTVSVSLPKRMQHHSFLEVKIQDRTQGIGGESNVDVGMAYITLNPLLPWLDSRERAESLETFRLQMLEEVLIEDAENARRSADGGLAARTGGGSFDEDATKKKEMLAAERSRKMAIPYNDPDMANLKIEEVDDYVSFKVAPRPQASRLSREGTSRDERGKAPGKSLSGMPGPVARASPGAGEETEKKGDPVAEKKEGGAQAAPPVAPSAHQREALAASPEEETYGFTPEQLNFVLADLEEDDAEEMTRDEVPYELEADFTVDDLPYLRTPIFRPTDAGVPETVGYLKYVCRVFQSTDEDEGAEMDAVCKSLIETYNSTRDLVVRAYVLAARGLVPPSGASDIQTYVWIQDSENAATLPGGLSYNIRDTGYTKKQGFKPEFNRCYTLACSLPENSIVQIAVMNMGRLTDECIGRTYLDVEDRFFNKKVEQMVIEESTPIELRTLKNEGSTVSHGSLRGFFEIMRADYAQLHPPYTLASAEPDEYQLRVVIWRVKAVPLDDNSSISLFVRTIYQLEDSSEIVKDTDTHYNSTDGTAVYNWRMVFDVLIPAQIPVLKLQIWNYALLSSTEPIGEANFDLTADFFRARKRQQHYRVPRMWVRCSHPAHKGKLRGTIEIEASILPREEAEYTPVGNGRDEPNRDPFLPAVTTNRTYIDWQQIGETVGAASSAIMSGLKWTGVWMTVAGIIALVIFVMFLLK.

C2 domains are found at residues 1–123, 161–281, and 506–629; these read MAAK…RQWV, VNEG…PRWF, and TKAG…PVWL. The segment at 871–952 is disordered; that stretch reads RPQASRLSRE…ALAASPEEET (82 aa). Basic and acidic residues-rich tracts occupy residues 877–889 and 912–926; these read LSREGTSRDERGK and ETEKKGDPVAEKKEG. C2 domains are found at residues 1032–1160 and 1192–1319; these read EMDA…EQMV and RADY…QQHY. The chain crosses the membrane as a helical span at residues 1404 to 1424; that stretch reads TGVWMTVAGIIALVIFVMFLL.

It belongs to the ferlin family.

Its subcellular location is the golgi apparatus. The protein localises to the trans-Golgi network membrane. It is found in the endosome membrane. The protein resides in the cytoplasm. Plays a role in microneme replenishment, probably at the vesicular trafficking level. Directs microneme organelle traffic differentially based on microneme population. Regulates microneme secretion: facilitates microneme membrane fusion with the plasma membrane. In Toxoplasma gondii, this protein is Ferlin 1.